The sequence spans 215 residues: MASRNNCSSSGNCSSGSLRNTCHIPASSSIALCSTNMGCGEVFCVPSSCQDHTWFMDNCPETFAEPLSGQPPSREASGFENSCCSSTYCVPRHCQGSGYIPASSFISGSCLPASYRPVSYVSSSCRPVSPFMNNCRPVSCVSGGYRPLPCGSNSCRPLGIVTYGCRPSGCVTYGPQTIHIVSNSLRPLQPVCGGCQPSIPVFGTCRPSCSAQGGQ.

It belongs to the PMG family. In terms of assembly, interacts with hair keratins.

In terms of biological role, in the hair cortex, hair keratin intermediate filaments are embedded in an interfilamentous matrix, consisting of hair keratin-associated proteins (KRTAP), which are essential for the formation of a rigid and resistant hair shaft through their extensive disulfide bond cross-linking with abundant cysteine residues of hair keratins. The matrix proteins include the high-sulfur and high-glycine-tyrosine keratins. This Mus musculus (Mouse) protein is Keratin-associated protein 26-1.